The sequence spans 223 residues: GTP cyclohydrolase 1 (223 aa).

Residues Cys114, His117, and Cys185 each contribute to the Zn(2+) site.

It belongs to the GTP cyclohydrolase I family. In terms of assembly, homomer.

It catalyses the reaction GTP + H2O = 7,8-dihydroneopterin 3'-triphosphate + formate + H(+). Its pathway is cofactor biosynthesis; 7,8-dihydroneopterin triphosphate biosynthesis; 7,8-dihydroneopterin triphosphate from GTP: step 1/1. The sequence is that of GTP cyclohydrolase 1 from Chlorobium chlorochromatii (strain CaD3).